The chain runs to 405 residues: Tryptophan synthase beta chain (405 aa).

The residue at position 98 (K98) is an N6-(pyridoxal phosphate)lysine.

Belongs to the TrpB family. Tetramer of two alpha and two beta chains. Pyridoxal 5'-phosphate serves as cofactor.

It carries out the reaction (1S,2R)-1-C-(indol-3-yl)glycerol 3-phosphate + L-serine = D-glyceraldehyde 3-phosphate + L-tryptophan + H2O. It functions in the pathway amino-acid biosynthesis; L-tryptophan biosynthesis; L-tryptophan from chorismate: step 5/5. Its function is as follows. The beta subunit is responsible for the synthesis of L-tryptophan from indole and L-serine. The chain is Tryptophan synthase beta chain from Xanthomonas oryzae pv. oryzae (strain PXO99A).